The chain runs to 768 residues: Ribosomal RNA large subunit methyltransferase K/L (768 aa).

Positions Asp60–Leu175 constitute a THUMP domain.

This sequence belongs to the methyltransferase superfamily. RlmKL family.

It localises to the cytoplasm. The enzyme catalyses guanosine(2445) in 23S rRNA + S-adenosyl-L-methionine = N(2)-methylguanosine(2445) in 23S rRNA + S-adenosyl-L-homocysteine + H(+). It catalyses the reaction guanosine(2069) in 23S rRNA + S-adenosyl-L-methionine = N(2)-methylguanosine(2069) in 23S rRNA + S-adenosyl-L-homocysteine + H(+). Specifically methylates the guanine in position 2445 (m2G2445) and the guanine in position 2069 (m7G2069) of 23S rRNA. This is Ribosomal RNA large subunit methyltransferase K/L from Psychrobacter arcticus (strain DSM 17307 / VKM B-2377 / 273-4).